The chain runs to 446 residues: Na(+)-translocating NADH-quinone reductase subunit A (446 aa).

It belongs to the NqrA family. Composed of six subunits; NqrA, NqrB, NqrC, NqrD, NqrE and NqrF.

The catalysed reaction is a ubiquinone + n Na(+)(in) + NADH + H(+) = a ubiquinol + n Na(+)(out) + NAD(+). Its function is as follows. NQR complex catalyzes the reduction of ubiquinone-1 to ubiquinol by two successive reactions, coupled with the transport of Na(+) ions from the cytoplasm to the periplasm. NqrA to NqrE are probably involved in the second step, the conversion of ubisemiquinone to ubiquinol. This Histophilus somni (strain 129Pt) (Haemophilus somnus) protein is Na(+)-translocating NADH-quinone reductase subunit A.